Consider the following 430-residue polypeptide: Histidine--tRNA ligase (430 aa).

It belongs to the class-II aminoacyl-tRNA synthetase family. Homodimer.

It is found in the cytoplasm. The catalysed reaction is tRNA(His) + L-histidine + ATP = L-histidyl-tRNA(His) + AMP + diphosphate + H(+). The chain is Histidine--tRNA ligase from Gloeothece citriformis (strain PCC 7424) (Cyanothece sp. (strain PCC 7424)).